The sequence spans 1503 residues: EF-hand calcium-binding domain-containing protein 5 (1503 aa).

The segment at 1–23 is disordered; it reads MNESASQEELRPAQENRKEDKER. The span at 8–23 shows a compositional bias: basic and acidic residues; it reads EELRPAQENRKEDKER. Position 77 is a phosphoserine (S77). 3 disordered regions span residues 477–518, 544–656, and 730–750; these read ASKT…EQGP, IEPG…QGPY, and FPETTKKEVQKDKPCEPKSQK. The segment covering 549–561 has biased composition (polar residues); that stretch reads HTESTLEQGSSRR. Composition is skewed to basic and acidic residues over residues 562–582 and 607–622; these read LLTEQETHRESTTEQGQHKGS and GSRRESIAEQDRHKGS. An EF-hand domain is found at 869–904; it reads RQRLLLEAIFQKWDSDGSGFLDLKEVDELLYTYKEG. Residues D882, D884, S886, and E893 each contribute to the Ca(2+) site.

This is EF-hand calcium-binding domain-containing protein 5 (EFCAB5) from Homo sapiens (Human).